We begin with the raw amino-acid sequence, 312 residues long: 2-phosphoglycerate kinase (312 aa).

An ATP-cone domain is found at 8 to 95; the sequence is SRILVTDKEY…LWRRVLKKHS (88 aa).

The protein belongs to the 2-phosphoglycerate kinase family. A divalent metal cation is required as a cofactor.

The enzyme catalyses (2R)-2-phosphoglycerate + ATP = (2R)-2,3-bisphosphoglycerate + ADP + H(+). It functions in the pathway thermoadapter biosynthesis; cyclic 2,3-diphosphoglycerate biosynthesis; cyclic 2,3-diphosphoglycerate from 2-phospho-D-glycerate: step 1/2. Catalyzes the phosphorylation of 2-phosphoglycerate to 2,3-diphosphoglycerate. Involved in the biosynthesis of cyclic 2,3-bisphosphoglycerate, a thermoprotectant. The protein is 2-phosphoglycerate kinase of Methanococcus maripaludis (strain C7 / ATCC BAA-1331).